The chain runs to 115 residues: U3-lycotoxin-Ls1r (115 aa).

The N-terminal stretch at 1 to 20 (MKFVLLFGVLLVTLFSYSSA) is a signal peptide. A propeptide spanning residues 21–44 (EMLDDFHQADEDELVSLIKKEEAR) is cleaved from the precursor. Intrachain disulfides connect Cys48–Cys63, Cys55–Cys72, Cys62–Cys87, and Cys74–Cys85.

This sequence belongs to the neurotoxin 19 (CSTX) family. 01 subfamily. In terms of tissue distribution, expressed by the venom gland.

It localises to the secreted. This chain is U3-lycotoxin-Ls1r, found in Lycosa singoriensis (Wolf spider).